A 156-amino-acid polypeptide reads, in one-letter code: Protein BUNDLE SHEATH DEFECTIVE 2, chloroplastic (156 aa).

A chloroplast-targeting transit peptide spans 1–41 (MNSAALNARTASVAPQPQACHACKCRQLLSRRVPPAQRQVE). Positions 78, 81, 89, 92, 133, 136, 144, and 147 each coordinate Zn(2+).

It belongs to the BSD2 chaperone family. As to quaternary structure, interacts with the RuBisCo large subunit (RbcL) assembled as an intermediate complex made of eight RbcL and eight BSD2 subunits.

It localises to the plastid. The protein resides in the chloroplast stroma. In terms of biological role, chloroplast chaperone required for RuBisCo biogenesis and translational regulation of the RuBisCo large subunit (RbcL). Stabilizes an end-state assembly intermediate of eight RbcL subunits until the small subunits (RBCSs) become available to produce a complete stable RuBisCo complex containing eight small and eight large subunits. The polypeptide is Protein BUNDLE SHEATH DEFECTIVE 2, chloroplastic (Chlamydomonas reinhardtii (Chlamydomonas smithii)).